The primary structure comprises 424 residues: MTQMEMARKGIVSEEMKKVAEYEGVDVEEVRQKIAEGRAVLPKNKLHRVSKPMIVGEGFSVKVNANIGTSQGFSSIEEEKEKARVAIEYGADSLMVLSTWGDLREIRRTIVEMSPVPVGSVPIYDSAVKSYQMKKNVVDFSEKDFFDMVIAHAEDGIDFMTIHVGVTRRVLERVKNSKRILKIVSRGGAIIAGWMIKNNRENPFYEHFDELLDIAKEYDITLSLGDGMRPGAVVDASDSQQFEELFVMGELVERAREKEVQVMLEGPGHVPLNEVEMNVKLMKKVGKGVPIFLLGPLPTDRAMGYDHIACAIGGALAGYYGADFLCYVTPSEHISLPDVEDVREGVIASKIAAVVADVARGNRKAWELEKRMALARKNFDWETMFDLSLGRDIAKKKYEERPYPDKGCSMCGPFCAIKIAEEFS.

Residues asparagine 66, methionine 95, tyrosine 124, histidine 163, 185–187 (SRG), 226–229 (DGMR), and glutamate 265 each bind substrate. A Zn(2+)-binding site is contributed by histidine 269. Residue phenylalanine 292 coordinates substrate. Histidine 333 contacts Zn(2+). [4Fe-4S] cluster contacts are provided by cysteine 408, cysteine 411, and cysteine 415.

This sequence belongs to the ThiC family. The cofactor is [4Fe-4S] cluster.

The enzyme catalyses 5-amino-1-(5-phospho-beta-D-ribosyl)imidazole + S-adenosyl-L-methionine = 4-amino-2-methyl-5-(phosphooxymethyl)pyrimidine + CO + 5'-deoxyadenosine + formate + L-methionine + 3 H(+). The protein operates within cofactor biosynthesis; thiamine diphosphate biosynthesis. Functionally, catalyzes the synthesis of the hydroxymethylpyrimidine phosphate (HMP-P) moiety of thiamine from aminoimidazole ribotide (AIR) in a radical S-adenosyl-L-methionine (SAM)-dependent reaction. The polypeptide is Phosphomethylpyrimidine synthase (Thermotoga neapolitana (strain ATCC 49049 / DSM 4359 / NBRC 107923 / NS-E)).